A 293-amino-acid polypeptide reads, in one-letter code: Acetyl-coenzyme A carboxylase carboxyl transferase subunit beta (293 aa).

Residues 29-293 (LWSKCPECGL…GSKSLELTNA (265 aa)) form the CoA carboxyltransferase N-terminal domain. Zn(2+) is bound by residues Cys-33, Cys-36, Cys-52, and Cys-55. The C4-type zinc-finger motif lies at 33–55 (CPECGLVVYLKDLRLNASVCAGC).

The protein belongs to the AccD/PCCB family. As to quaternary structure, acetyl-CoA carboxylase is a heterohexamer composed of biotin carboxyl carrier protein (AccB), biotin carboxylase (AccC) and two subunits each of ACCase subunit alpha (AccA) and ACCase subunit beta (AccD). It depends on Zn(2+) as a cofactor.

It localises to the cytoplasm. The catalysed reaction is N(6)-carboxybiotinyl-L-lysyl-[protein] + acetyl-CoA = N(6)-biotinyl-L-lysyl-[protein] + malonyl-CoA. It participates in lipid metabolism; malonyl-CoA biosynthesis; malonyl-CoA from acetyl-CoA: step 1/1. Its function is as follows. Component of the acetyl coenzyme A carboxylase (ACC) complex. Biotin carboxylase (BC) catalyzes the carboxylation of biotin on its carrier protein (BCCP) and then the CO(2) group is transferred by the transcarboxylase to acetyl-CoA to form malonyl-CoA. This Synechococcus sp. (strain CC9902) protein is Acetyl-coenzyme A carboxylase carboxyl transferase subunit beta.